A 190-amino-acid polypeptide reads, in one-letter code: MPIDFLQPADIVAPQLLGCIFTHDGVSIRLTEVEAYLGAEDAAAHTHRGKTARNAAMFGPGGHMYIYISYGIHRAGNIACAPEGVGQGVLLRAGEVVAGEDIAYRRRGDVPFTRLAQGPGNLGQALNFQLSDNHAPINGTDFQLMEPSERPEWVSGPRVGITKNADAPLRFWIPGDPTVSVRRGRPKTRK.

The protein belongs to the DNA glycosylase MPG family.

The protein is Putative 3-methyladenine DNA glycosylase of Corynebacterium efficiens (strain DSM 44549 / YS-314 / AJ 12310 / JCM 11189 / NBRC 100395).